The chain runs to 174 residues: von Hippel-Lindau tumor suppressor homolog (174 aa).

This sequence belongs to the VHL family. In terms of assembly, interacts with hif-1 (hydroxylated on 'Pro-621'); the interaction induces hif-1 degradation. May be a component of the cullin E3 ubiquitin ligase complex.

Its pathway is protein modification; protein ubiquitination. In terms of biological role, involved in the response to variation in environmental oxygen levels by targeting the hypoxia-inducible transcription factor hif-1 for proteasomal degradation when oxygen levels are normal (around 20%). By regulating hif-1 expression, plays a role in iron homeostasis, aging, heat acclimation and progeny size. Mediates resistance to enteropathogenic E.coli. Mediates susceptibility to B.thuringiensis pore-forming toxins. Not involved in P.aeruginosa susceptibility. This chain is von Hippel-Lindau tumor suppressor homolog, found in Caenorhabditis elegans.